Here is an 84-residue protein sequence, read N- to C-terminus: Small ribosomal subunit protein uS17 (84 aa).

It belongs to the universal ribosomal protein uS17 family. Part of the 30S ribosomal subunit.

In terms of biological role, one of the primary rRNA binding proteins, it binds specifically to the 5'-end of 16S ribosomal RNA. The sequence is that of Small ribosomal subunit protein uS17 from Clostridium botulinum (strain Alaska E43 / Type E3).